The chain runs to 533 residues: tRNA(Ile)-lysidine synthase (533 aa).

21–26 provides a ligand contact to ATP; sequence SGGADS. Residues 377–500 form the CMP/dCMP-type deaminase domain; it reads DLLDTAMGEA…DLLSSHWGHV (124 aa).

The protein belongs to the tRNA(Ile)-lysidine synthase family.

It localises to the cytoplasm. It carries out the reaction cytidine(34) in tRNA(Ile2) + L-lysine + ATP = lysidine(34) in tRNA(Ile2) + AMP + diphosphate + H(+). Ligates lysine onto the cytidine present at position 34 of the AUA codon-specific tRNA(Ile) that contains the anticodon CAU, in an ATP-dependent manner. Cytidine is converted to lysidine, thus changing the amino acid specificity of the tRNA from methionine to isoleucine. The chain is tRNA(Ile)-lysidine synthase from Deinococcus deserti (strain DSM 17065 / CIP 109153 / LMG 22923 / VCD115).